The chain runs to 135 residues: Small ribosomal subunit protein uS11 (135 aa).

The protein belongs to the universal ribosomal protein uS11 family. Part of the 30S ribosomal subunit. Interacts with proteins S7 and S18. Binds to IF-3.

In terms of biological role, located on the platform of the 30S subunit, it bridges several disparate RNA helices of the 16S rRNA. Forms part of the Shine-Dalgarno cleft in the 70S ribosome. This is Small ribosomal subunit protein uS11 from Solibacter usitatus (strain Ellin6076).